A 376-amino-acid polypeptide reads, in one-letter code: Succinyl-diaminopimelate desuccinylase (376 aa).

His67 contacts Zn(2+). Asp69 is a catalytic residue. Residue Asp100 participates in Zn(2+) binding. The active-site Proton acceptor is the Glu134. Zn(2+) contacts are provided by Glu135, Glu163, and His349.

It belongs to the peptidase M20A family. DapE subfamily. In terms of assembly, homodimer. Zn(2+) is required as a cofactor. Co(2+) serves as cofactor.

It carries out the reaction N-succinyl-(2S,6S)-2,6-diaminopimelate + H2O = (2S,6S)-2,6-diaminopimelate + succinate. Its pathway is amino-acid biosynthesis; L-lysine biosynthesis via DAP pathway; LL-2,6-diaminopimelate from (S)-tetrahydrodipicolinate (succinylase route): step 3/3. In terms of biological role, catalyzes the hydrolysis of N-succinyl-L,L-diaminopimelic acid (SDAP), forming succinate and LL-2,6-diaminopimelate (DAP), an intermediate involved in the bacterial biosynthesis of lysine and meso-diaminopimelic acid, an essential component of bacterial cell walls. This is Succinyl-diaminopimelate desuccinylase from Shewanella woodyi (strain ATCC 51908 / MS32).